The primary structure comprises 302 residues: Sulfate adenylyltransferase subunit 2 (302 aa).

The disordered stretch occupies residues 279-302 (ERQGRAIDHDSSGSMELKKRQGYF). Basic and acidic residues predominate over residues 280–302 (RQGRAIDHDSSGSMELKKRQGYF).

This sequence belongs to the PAPS reductase family. CysD subfamily. As to quaternary structure, heterodimer composed of CysD, the smaller subunit, and CysN.

The catalysed reaction is sulfate + ATP + H(+) = adenosine 5'-phosphosulfate + diphosphate. The protein operates within sulfur metabolism; hydrogen sulfide biosynthesis; sulfite from sulfate: step 1/3. Functionally, with CysN forms the ATP sulfurylase (ATPS) that catalyzes the adenylation of sulfate producing adenosine 5'-phosphosulfate (APS) and diphosphate, the first enzymatic step in sulfur assimilation pathway. APS synthesis involves the formation of a high-energy phosphoric-sulfuric acid anhydride bond driven by GTP hydrolysis by CysN coupled to ATP hydrolysis by CysD. This is Sulfate adenylyltransferase subunit 2 from Aliivibrio fischeri (strain ATCC 700601 / ES114) (Vibrio fischeri).